Reading from the N-terminus, the 105-residue chain is Large ribosomal subunit protein bL21 (105 aa).

The protein belongs to the bacterial ribosomal protein bL21 family. Part of the 50S ribosomal subunit. Contacts protein L20.

This protein binds to 23S rRNA in the presence of protein L20. The sequence is that of Large ribosomal subunit protein bL21 from Aliarcobacter butzleri (strain RM4018) (Arcobacter butzleri).